We begin with the raw amino-acid sequence, 789 residues long: Ribosomal protein S6 kinase alpha-5 (789 aa).

In terms of domain architecture, Protein kinase 1 spans 39-308 (FELLKVLGTG…ADEIKQHPFF (270 aa)). ATP contacts are provided by residues 45-53 (LGTGAYGKV) and Lys71. Asp167 (proton acceptor) is an active-site residue. Ser202 is subject to Phosphoserine; by autocatalysis. In terms of domain architecture, AGC-kinase C-terminal spans 309–377 (QNINWDDLAA…VAPSILFKRN (69 aa)). Ser350 bears the Phosphoserine mark. A phosphoserine; by autocatalysis mark is found at Ser366 and Ser371. Residues 416-677 (DLKEKPLGEG…MSSLRYNEWL (262 aa)) form the Protein kinase 2 domain. Residues 422-430 (LGEGSFSIC) and Lys445 contribute to the ATP site. Catalysis depends on Asp534, which acts as the Proton acceptor. Phosphothreonine occurs at positions 571 and 690. Positions 731–789 (AKRRKMKKTSTSTETRSSSSESSHSSSSHSHGKTTPTKTLQPTNPTDSNNPETIFQFSD) are disordered. Residues 739–769 (TSTSTETRSSSSESSHSSSSHSHGKTTPTKT) are compositionally biased toward low complexity. Phosphoserine; by autocatalysis is present on residues Ser740, Ser742, and Ser748. Residues 770–789 (LQPTNPTDSNNPETIFQFSD) show a composition bias toward polar residues.

This sequence belongs to the protein kinase superfamily. AGC Ser/Thr protein kinase family. S6 kinase subfamily. Mg(2+) is required as a cofactor. In terms of processing, ser-366 and Thr-571 phosphorylation is required for kinase activity. Ser-366 and Ser-202 are autophosphorylated by the C-terminal kinase domain, and their phosphorylation is essential for the catalytic activity of the N-terminal kinase domain. Phosphorylated at Ser-350, Thr-571 and Thr-690 by MAP kinases. Autophosphorylated at Ser-740, Ser-742 and Ser-748 by the N-terminal kinase domain. Widely expressed with high levels in heart, brain and placenta. Less abundant in lung, kidney and liver.

It is found in the nucleus. It carries out the reaction L-seryl-[protein] + ATP = O-phospho-L-seryl-[protein] + ADP + H(+). It catalyses the reaction L-threonyl-[protein] + ATP = O-phospho-L-threonyl-[protein] + ADP + H(+). Activated by phosphorylation at Ser-350, Thr-571 and Thr-690 by MAP kinases, and by further autophosphorylation of Ser-202, Ser-366 and Ser-371 by the activated C-terminal kinase domain. The active N-terminal kinase domain finally phosphorylates downstream substrates, as well as Ser-740, Ser-742 and Ser-748 in its own C-terminal region. Serine/threonine-protein kinase that is required for the mitogen or stress-induced phosphorylation of the transcription factors CREB1 and ATF1 and that contributes to gene activation by histone phosphorylation. Phosphorylates CREB1 and ATF1 in response to mitogenic or stress stimuli such as UV-C irradiation, epidermal growth factor (EGF) and anisomycin. Directly represses transcription via phosphorylation of 'Ser-1' of histone H2A. Phosphorylates 'Ser-10' of histone H3 in response to mitogenics, stress stimuli and EGF, which results in the transcriptional activation of several immediate early genes, including proto-oncogenes c-fos/FOS and c-jun/JUN. May also phosphorylate 'Ser-28' of histone H3. Mediates the mitogen- and stress-induced phosphorylation of high mobility group protein 1 (HMGN1/HMG14). In Gallus gallus (Chicken), this protein is Ribosomal protein S6 kinase alpha-5 (RPS6KA5).